A 156-amino-acid polypeptide reads, in one-letter code: Small ribosomal subunit protein uS7 (156 aa).

The protein belongs to the universal ribosomal protein uS7 family. As to quaternary structure, part of the 30S ribosomal subunit. Contacts proteins S9 and S11.

One of the primary rRNA binding proteins, it binds directly to 16S rRNA where it nucleates assembly of the head domain of the 30S subunit. Is located at the subunit interface close to the decoding center, probably blocks exit of the E-site tRNA. This is Small ribosomal subunit protein uS7 from Prochlorococcus marinus subsp. pastoris (strain CCMP1986 / NIES-2087 / MED4).